Here is a 418-residue protein sequence, read N- to C-terminus: Putative ion-transport protein YfeO (418 aa).

A run of 12 helical transmembrane segments spans residues 10-30 (LLLS…LIVV), 54-74 (DSPF…GLVI), 99-119 (ALLG…SLGP), 120-140 (EHPI…RLLP), 149-169 (ILAS…AALI), 186-206 (LFAP…FFHP), 223-243 (ILSG…AVWC), 258-278 (VLVL…GGPV), 300-320 (DYFL…ASGF), 322-342 (GGRI…LHEH), 343-363 (VPAV…VLVV), and 371-391 (LFMA…CIVM).

It belongs to the chloride channel (TC 2.A.49) family.

It is found in the cell membrane. The protein is Putative ion-transport protein YfeO of Escherichia coli O17:K52:H18 (strain UMN026 / ExPEC).